The primary structure comprises 500 residues: Lysine--tRNA ligase (500 aa).

Residues Glu-410 and Glu-417 each coordinate Mg(2+).

The protein belongs to the class-II aminoacyl-tRNA synthetase family. In terms of assembly, homodimer. The cofactor is Mg(2+).

It localises to the cytoplasm. It carries out the reaction tRNA(Lys) + L-lysine + ATP = L-lysyl-tRNA(Lys) + AMP + diphosphate. This is Lysine--tRNA ligase from Shewanella frigidimarina (strain NCIMB 400).